The following is a 58-amino-acid chain: MLEKMGIVVAFLISLTVLTINSLTIVEKVRNLKNGTSKKKKRIRKRLRPKRQRQRIRR.

A helical transmembrane segment spans residues 6-26 (GIVVAFLISLTVLTINSLTIV). A disordered region spans residues 35 to 58 (GTSKKKKRIRKRLRPKRQRQRIRR). A compositionally biased stretch (basic residues) spans 36–58 (TSKKKKRIRKRLRPKRQRQRIRR).

It localises to the cell membrane. The sequence is that of SPbeta prophage-derived uncharacterized protein YonT (yonT) from Bacillus subtilis (strain 168).